We begin with the raw amino-acid sequence, 665 residues long: Protein LOW PHOTOSYNTHETIC EFFICIENCY 1, chloroplastic (665 aa).

A chloroplast-targeting transit peptide spans 1 to 68 (MQALSILPLK…VSSNRKVLFL (68 aa)). PPR repeat units follow at residues 145–179 (PLQV…KSES), 181–217 (GVIG…GIVP), 218–252 (NIVT…GFEP), 253–283 (NPIT…LREK), 309–344 (GRIC…GVRP), 345–375 (SREE…IRER), 380–414 (SLSV…GPEP), 422–456 (VVSH…GLKP), 457–491 (QRRH…GEKP), 492–526 (TVIS…GIEP), 527–561 (NLYA…GIEP), 562–596 (SVVT…NVEP), and 597–631 (NEIT…GLKL).

The protein belongs to the PPR family. P subfamily. In terms of assembly, interacts with HCF173.

The protein resides in the plastid. It is found in the chloroplast thylakoid membrane. It localises to the chloroplast stroma. Functionally, required for light-regulated photosystem II (PSII) biogenesis and grana thylakoids formation by binding to the 5' UTR of PSII subunit mRNAs (e.g. psbJ, psbN and psbA) in a light-dependent manner through a redox-based mechanism, and facilitating the association of HCF173 with target mRNAs, which encodes PSII reaction center proteins (e.g. J, N and D1), thus regulating its expression by modulating ribosome loading. In Arabidopsis thaliana (Mouse-ear cress), this protein is Protein LOW PHOTOSYNTHETIC EFFICIENCY 1, chloroplastic.